The sequence spans 69 residues: Pancreatic propolypeptide YG (69 aa).

The protein belongs to the NPY family.

Its subcellular location is the secreted. The chain is Pancreatic propolypeptide YG from Lophius americanus (American angler).